Reading from the N-terminus, the 95-residue chain is Glutamine synthetase and cystathionine beta-lyase binding protein (95 aa).

In terms of assembly, interacts with glutamine synthetase (TTHA1329) and cystathionine beta-lyase (TTHA1620), but proteins do not form a ternary complex.

In terms of biological role, binds to glutamine synthetase and cystathionine beta-lyase. May be utilized for the efficient use of nitrogen in the global nitrogen regulation of T.thermophilus. The polypeptide is Glutamine synthetase and cystathionine beta-lyase binding protein (Thermus thermophilus (strain ATCC 27634 / DSM 579 / HB8)).